The sequence spans 137 residues: Putative FERT-1 protein (137 aa).

The protein is Putative FERT-1 protein (FERT-1) of Ascaris suum (Pig roundworm).